A 216-amino-acid chain; its full sequence is ATP phosphoribosyltransferase (216 aa).

Belongs to the ATP phosphoribosyltransferase family. Short subfamily. Heteromultimer composed of HisG and HisZ subunits.

It localises to the cytoplasm. It catalyses the reaction 1-(5-phospho-beta-D-ribosyl)-ATP + diphosphate = 5-phospho-alpha-D-ribose 1-diphosphate + ATP. It functions in the pathway amino-acid biosynthesis; L-histidine biosynthesis; L-histidine from 5-phospho-alpha-D-ribose 1-diphosphate: step 1/9. Functionally, catalyzes the condensation of ATP and 5-phosphoribose 1-diphosphate to form N'-(5'-phosphoribosyl)-ATP (PR-ATP). Has a crucial role in the pathway because the rate of histidine biosynthesis seems to be controlled primarily by regulation of HisG enzymatic activity. The polypeptide is ATP phosphoribosyltransferase (Chromohalobacter salexigens (strain ATCC BAA-138 / DSM 3043 / CIP 106854 / NCIMB 13768 / 1H11)).